A 196-amino-acid polypeptide reads, in one-letter code: Nucleoside triphosphate pyrophosphatase (196 aa).

The Proton acceptor role is filled by D73.

It belongs to the Maf family. A divalent metal cation serves as cofactor.

The protein resides in the cytoplasm. The catalysed reaction is a ribonucleoside 5'-triphosphate + H2O = a ribonucleoside 5'-phosphate + diphosphate + H(+). It catalyses the reaction a 2'-deoxyribonucleoside 5'-triphosphate + H2O = a 2'-deoxyribonucleoside 5'-phosphate + diphosphate + H(+). Functionally, nucleoside triphosphate pyrophosphatase. May have a dual role in cell division arrest and in preventing the incorporation of modified nucleotides into cellular nucleic acids. This chain is Nucleoside triphosphate pyrophosphatase, found in Anaplasma marginale (strain Florida).